We begin with the raw amino-acid sequence, 335 residues long: Probable cytosolic iron-sulfur protein assembly protein Ciao1 (335 aa).

WD repeat units lie at residues 12-51 (GHKG…WSTK), 57-96 (GHKR…FECN), 101-140 (GHEN…EFEC), 146-185 (PHTQ…NDWD), 192-231 (SHTS…NTAG), 250-289 (QHSR…KPDE), and 301-335 (AHDQ…KVTE).

Belongs to the WD repeat CIA1 family. In terms of processing, conjugated to URM1, a ubiquitin-like protein.

Functionally, essential component of the cytosolic iron-sulfur (Fe/S) protein assembly machinery. Required for the maturation of extramitochondrial Fe/S proteins. The protein is Probable cytosolic iron-sulfur protein assembly protein Ciao1 of Drosophila melanogaster (Fruit fly).